A 349-amino-acid chain; its full sequence is Decapping nuclease RAI1 (349 aa).

Residue Glu157 participates in a divalent metal cation binding. A substrate-binding site is contributed by Glu205. Asp207, Glu222, and Leu223 together coordinate a divalent metal cation. Substrate contacts are provided by Lys224 and Gln248.

The protein belongs to the DXO/Dom3Z family. As to quaternary structure, interacts with RAT1; the interaction is direct, stabilizes RAT1 protein structure and stimulates its exoribonuclease activity. The interaction also stimulates RAI1 pyrophosphohydrolase activity, probably by recruiting it to mRNA substrates. A divalent metal cation is required as a cofactor.

Its subcellular location is the nucleus. It carries out the reaction a 5'-end NAD(+)-phospho-ribonucleoside in mRNA + H2O = a 5'-end phospho-ribonucleoside in mRNA + NAD(+) + H(+). The catalysed reaction is a 5'-end (N(7)-methyl 5'-triphosphoguanosine)-ribonucleoside-ribonucleotide in mRNA + H2O = a (N(7)-methyl 5'-triphosphoguanosine)-nucleoside + a 5'-end phospho-ribonucleoside in mRNA + H(+). The enzyme catalyses a 5'-end triphospho-ribonucleoside in mRNA + H2O = a 5'-end phospho-ribonucleoside in mRNA + diphosphate + H(+). In terms of biological role, decapping enzyme for NAD-capped RNAs: specifically hydrolyzes the nicotinamide adenine dinucleotide (NAD) cap from a subset of RNAs by removing the entire NAD moiety from the 5'-end of an NAD-capped RNA. The NAD-cap is present at the 5'-end of some RNAs and snoRNAs. In contrast to the canonical 5'-end N7 methylguanosine (m7G) cap, the NAD cap promotes mRNA decay. Also acts as a non-canonical decapping enzyme that removes the entire cap structure of m7G capped or incompletely capped RNAs. Has decapping activity toward incomplete 5'-end m7G cap mRNAs such as unmethylated 5'-end-capped RNA (cap0), while it has no activity toward 2'-O-ribose methylated m7G cap (cap1). Also possesses RNA 5'-pyrophosphohydrolase activity by hydrolyzing the 5'-end triphosphate to release pyrophosphates. Stimulates exoribonuclease activity of Rat1, allowing it to degrade RNAs with stable secondary structure more effectively. The sequence is that of Decapping nuclease RAI1 (RAI1) from Yarrowia lipolytica (strain CLIB 122 / E 150) (Yeast).